Reading from the N-terminus, the 871-residue chain is Probable receptor-like protein kinase At2g21480 (871 aa).

An N-terminal signal peptide occupies residues 1–39; that stretch reads MEIRKKPNIPMCLVLDSSSRPFMTLLFTILLFLTGLASA. Topologically, residues 40-439 are extracellular; it reads VGAVGGSPTA…GQRASMGKQG (400 aa). 5 N-linked (GlcNAc...) asparagine glycosylation sites follow: N169, N182, N253, N316, and N381. Residues 440 to 460 form a helical membrane-spanning segment; sequence MVATAGFVMMFGAFVGLGAMV. The Cytoplasmic segment spans residues 461–871; it reads YKWKKRPQDW…FTQFASLNGR (411 aa). Positions 525 to 797 constitute a Protein kinase domain; the sequence is FDASEIIGVG…GDVLWNLEYA (273 aa). ATP contacts are provided by residues 531-539 and K553; that span reads IGVGGFGNV. Catalysis depends on D649, which acts as the Proton acceptor. The interval 808–871 is disordered; the sequence is KAEAEEVETP…FTQFASLNGR (64 aa). Over residues 817–839 the composition is skewed to low complexity; it reads PKPVAVPAAAPTSPAATTAAASE. Polar residues predominate over residues 854-871; it reads DQHSGTTMFTQFASLNGR.

The protein belongs to the protein kinase superfamily. Ser/Thr protein kinase family.

It is found in the membrane. The sequence is that of Probable receptor-like protein kinase At2g21480 from Arabidopsis thaliana (Mouse-ear cress).